The following is a 238-amino-acid chain: MVHLRRTTAPYWWPIPRKIGGVWVVRSSPGPHSLAYSLPLAIIIRDVLKYAKTMREARYIISRGYVKIDGVIRKDYKFPVGLMDVVEIVPTGEIYRVVPDEKKYYALIPISSEEATLKLLRVEGKTAVKGGKLQLHFHDGRNLIVSQDVGRHIKTFDTVLYDLQNKNIKMHIPFKLGAYAVVTRGGNVGFSGKLYEIVWTLKRRQSVVALKRNEEVRRTILDYIMITGSEAPVIKISP.

An S4 RNA-binding domain is found at 38–110; the sequence is LPLAIIIRDV…EKKYYALIPI (73 aa).

This sequence belongs to the eukaryotic ribosomal protein eS4 family.

The sequence is that of Small ribosomal subunit protein eS4 from Pyrobaculum islandicum (strain DSM 4184 / JCM 9189 / GEO3).